A 101-amino-acid polypeptide reads, in one-letter code: NAD(P)H-quinone oxidoreductase subunit 4L, chloroplastic (101 aa).

3 consecutive transmembrane segments (helical) span residues 2-22 (MLEH…YGLI), 32-52 (MCLE…SDFF), and 61-81 (IFSI…LAIV).

Belongs to the complex I subunit 4L family. In terms of assembly, NDH is composed of at least 16 different subunits, 5 of which are encoded in the nucleus.

It localises to the plastid. The protein localises to the chloroplast thylakoid membrane. It carries out the reaction a plastoquinone + NADH + (n+1) H(+)(in) = a plastoquinol + NAD(+) + n H(+)(out). The catalysed reaction is a plastoquinone + NADPH + (n+1) H(+)(in) = a plastoquinol + NADP(+) + n H(+)(out). Functionally, NDH shuttles electrons from NAD(P)H:plastoquinone, via FMN and iron-sulfur (Fe-S) centers, to quinones in the photosynthetic chain and possibly in a chloroplast respiratory chain. The immediate electron acceptor for the enzyme in this species is believed to be plastoquinone. Couples the redox reaction to proton translocation, and thus conserves the redox energy in a proton gradient. The chain is NAD(P)H-quinone oxidoreductase subunit 4L, chloroplastic from Guizotia abyssinica (Niger).